The following is a 134-amino-acid chain: Transcription antitermination protein NusB (134 aa).

Belongs to the NusB family.

Involved in transcription antitermination. Required for transcription of ribosomal RNA (rRNA) genes. Binds specifically to the boxA antiterminator sequence of the ribosomal RNA (rrn) operons. This Syntrophomonas wolfei subsp. wolfei (strain DSM 2245B / Goettingen) protein is Transcription antitermination protein NusB.